Reading from the N-terminus, the 1861-residue chain is Amylopullulanase (1861 aa).

The first 35 residues, Met1–Ala35, serve as a signal peptide directing secretion. Ca(2+) is bound by residues Asp248, Asn250, Asp288, Asp343, Asn401, Asp403, Asn406, Asp407, and Asp453. Substrate-binding residues include His526 and Arg626. Asp628 acts as the Nucleophile in catalysis. The active-site Proton donor is the Glu657. Residues His733–Asp734, Asp793, and Arg797 each bind substrate. Fibronectin type-III domains are found at residues Ala929–Ile1021 and Lys1158–Ile1252. The region spanning Lys1246–Asp1354 is the CBM20 domain. Residues Gln1448–Ser1486 are disordered. Low complexity predominate over residues Asn1450–Ser1486. 3 SLH domains span residues Glu1677–Glu1740, Phe1741–Asn1799, and Ala1802–Ile1861.

It belongs to the glycosyl hydrolase 13 family. It depends on Ca(2+) as a cofactor. Glycosylated.

Its subcellular location is the secreted. It localises to the cell wall. The catalysed reaction is Endohydrolysis of (1-&gt;4)-alpha-D-glucosidic linkages in polysaccharides containing three or more (1-&gt;4)-alpha-linked D-glucose units.. It catalyses the reaction Hydrolysis of (1-&gt;6)-alpha-D-glucosidic linkages in pullulan, amylopectin and glycogen, and in the alpha- and beta-limit dextrins of amylopectin and glycogen.. The protein is Amylopullulanase (amyB) of Thermoanaerobacterium thermosulfurigenes (Clostridium thermosulfurogenes).